The primary structure comprises 766 residues: Dolichyl pyrophosphate Glc1Man9GlcNAc2 alpha-1,3-glucosyltransferase (766 aa).

The next 12 helical transmembrane spans lie at 6 to 26, 60 to 80, 96 to 116, 156 to 176, 190 to 210, 228 to 248, 324 to 344, 350 to 370, 395 to 415, 423 to 443, 452 to 472, and 482 to 502; these read LVLAVTAILISFKCLLIPAYV, YPPFFAYFELGLASVAHFFGF, ILIFQRFSVIFCDILYIAVCA, SIHFQYNSMLTAIFLMSLFFI, ILLNFKHIYVYYALGYVFYYL, AISLAIALLIPFCASIFPFIH, PMGTLCLVVISSMIVLTGLVI, ADFSLFAVFSAFCFFYFGYHV, ILIHLTCIASFSLFPLLFTPF, ICVSYFFIQLVFLKRVTLMPL, VASWLLMGMVEVYNTFLHKWL, and LMAISILTAIELTGLIGALIW.

The protein belongs to the ALG6/ALG8 glucosyltransferase family.

It is found in the endoplasmic reticulum membrane. The catalysed reaction is an alpha-D-Glc-(1-&gt;3)-alpha-D-Man-(1-&gt;2)-alpha-D-Man-(1-&gt;2)-alpha-D-Man-(1-&gt;3)-[alpha-D-Man-(1-&gt;2)-alpha-D-Man-(1-&gt;3)-[alpha-D-Man-(1-&gt;2)-alpha-D-Man-(1-&gt;6)]-alpha-D-Man-(1-&gt;6)]-beta-D-Man-(1-&gt;4)-beta-D-GlcNAc-(1-&gt;4)-alpha-D-GlcNAc-diphospho-di-trans,poly-cis-dolichol + a di-trans,poly-cis-dolichyl beta-D-glucosyl phosphate = an alpha-D-Glc-(1-&gt;3)-alpha-D-Glc-(1-&gt;3)-alpha-D-Man-(1-&gt;2)-alpha-D-Man-(1-&gt;2)-alpha-D-Man-(1-&gt;3)-[alpha-D-Man-(1-&gt;2)-alpha-D-Man-(1-&gt;3)-[alpha-D-Man-(1-&gt;2)-alpha-D-Man-(1-&gt;6)]-alpha-D-Man-(1-&gt;6)]-beta-D-Man-(1-&gt;4)-beta-D-GlcNAc-(1-&gt;4)-alpha-D-GlcNAc-diphospho-di-trans,poly-cis-dolichol + a di-trans,poly-cis-dolichyl phosphate + H(+). The protein operates within protein modification; protein glycosylation. Its function is as follows. Dolichyl pyrophosphate Glc1Man9GlcNAc2 alpha-1,3-glucosyltransferase that operates in the biosynthetic pathway of dolichol-linked oligosaccharides, the glycan precursors employed in protein asparagine (N)-glycosylation. The assembly of dolichol-linked oligosaccharides begins on the cytosolic side of the endoplasmic reticulum membrane and finishes in its lumen. The sequential addition of sugars to dolichol pyrophosphate produces dolichol-linked oligosaccharides containing fourteen sugars, including two GlcNAcs, nine mannoses and three glucoses. Once assembled, the oligosaccharide is transferred from the lipid to nascent proteins by oligosaccharyltransferases. In the lumen of the endoplasmic reticulum, adds the second glucose residue from dolichyl phosphate glucose (Dol-P-Glc) onto the lipid-linked oligosaccharide intermediate Glc(1)Man(9)GlcNAc(2)-PP-Dol to produce Glc(2)Man(9)GlcNAc(2)-PP-Dol. This Caenorhabditis elegans protein is Dolichyl pyrophosphate Glc1Man9GlcNAc2 alpha-1,3-glucosyltransferase.